Reading from the N-terminus, the 268-residue chain is Orotidine 5'-phosphate decarboxylase (268 aa).

Residues Asp-38, Lys-60–His-62, Asp-92–Thr-101, Tyr-218, and Arg-236 each bind substrate. Lys-94 acts as the Proton donor in catalysis.

This sequence belongs to the OMP decarboxylase family.

It catalyses the reaction orotidine 5'-phosphate + H(+) = UMP + CO2. It functions in the pathway pyrimidine metabolism; UMP biosynthesis via de novo pathway; UMP from orotate: step 2/2. This Candida tropicalis (Yeast) protein is Orotidine 5'-phosphate decarboxylase (URA3).